A 208-amino-acid chain; its full sequence is 3-demethoxyubiquinol 3-hydroxylase (208 aa).

Glutamate 57, glutamate 87, histidine 90, glutamate 139, glutamate 171, and histidine 174 together coordinate Fe cation.

This sequence belongs to the COQ7 family. It depends on Fe cation as a cofactor.

The protein resides in the cell membrane. It catalyses the reaction a 5-methoxy-2-methyl-3-(all-trans-polyprenyl)benzene-1,4-diol + AH2 + O2 = a 3-demethylubiquinol + A + H2O. It participates in cofactor biosynthesis; ubiquinone biosynthesis. Catalyzes the hydroxylation of 2-nonaprenyl-3-methyl-6-methoxy-1,4-benzoquinol during ubiquinone biosynthesis. In Herbaspirillum seropedicae, this protein is 3-demethoxyubiquinol 3-hydroxylase.